The primary structure comprises 524 residues: Probable pectinesterase/pectinesterase inhibitor 42 (524 aa).

The N-terminal stretch at 1–22 (MLVKVFSFFILMITMVVIGVSK) is a signal peptide. Residues 23–172 (EYCDDKHSCQ…ISKAKVALAL (150 aa)) form a pectinesterase inhibitor 42 region. The tract at residues 215–510 (DVVVAKDGTG…FTVAKLLDGE (296 aa)) is pectinesterase 42. N-linked (GlcNAc...) asparagine glycans are attached at residues N265 and N281. T290 is a substrate binding site. The Proton donor; for pectinesterase activity role is filled by D343. A disulfide bridge links C357 with C377. D364 serves as the catalytic Nucleophile; for pectinesterase activity. The N-linked (GlcNAc...) asparagine glycan is linked to N412. The substrate site is built by R430 and W432.

In the N-terminal section; belongs to the PMEI family. It in the C-terminal section; belongs to the pectinesterase family. As to expression, expressed in siliques but not in flower buds.

It localises to the secreted. Its subcellular location is the cell wall. The enzyme catalyses [(1-&gt;4)-alpha-D-galacturonosyl methyl ester](n) + n H2O = [(1-&gt;4)-alpha-D-galacturonosyl](n) + n methanol + n H(+). It functions in the pathway glycan metabolism; pectin degradation; 2-dehydro-3-deoxy-D-gluconate from pectin: step 1/5. Functionally, acts in the modification of cell walls via demethylesterification of cell wall pectin. The sequence is that of Probable pectinesterase/pectinesterase inhibitor 42 (PME42) from Arabidopsis thaliana (Mouse-ear cress).